We begin with the raw amino-acid sequence, 65 residues long: Large ribosomal subunit protein bL35 (65 aa).

Belongs to the bacterial ribosomal protein bL35 family.

The protein is Large ribosomal subunit protein bL35 of Nostoc sp. (strain PCC 7120 / SAG 25.82 / UTEX 2576).